A 97-amino-acid chain; its full sequence is ESAT-6-like protein EsxA (97 aa).

It belongs to the WXG100 family. ESAT-6 subfamily. Forms a tight 1:1 complex with EsxB. Forms a complex with EccC and EsxB, probably wholly mediated by EsxB.

It is found in the secreted. Its function is as follows. May help regulate assembly and function of the type VII secretion system (T7SS). EsxA disassembles pre-formed EccC-EsxB multimers, possibly by making EccC-EsxA-EsxB trimers instead of EccC-EsxB-EsxB-EccC tetramers. The chain is ESAT-6-like protein EsxA from Thermomonospora curvata (strain ATCC 19995 / DSM 43183 / JCM 3096 / KCTC 9072 / NBRC 15933 / NCIMB 10081 / Henssen B9).